Here is a 574-residue protein sequence, read N- to C-terminus: Frizzled and smoothened-like protein G (574 aa).

The signal sequence occupies residues 1-19 (MKSIIFITFFIFFLKKLNG). Over 20-246 (LPNGYGVGLV…EKWNQIENLS (227 aa)) the chain is Extracellular. Residues 30-181 (DPNGQCMNYI…GLYEVPCFNP (152 aa)) form the FZ domain. 4 disulfide bridges follow: Cys-35/Cys-109, Cys-48/Cys-102, Cys-91/Cys-138, and Cys-127/Cys-178. 6 N-linked (GlcNAc...) asparagine glycosylation sites follow: Asn-119, Asn-161, Asn-187, Asn-206, Asn-233, and Asn-244. Residues 247–267 (KVLSTISFVCSIYNILSFGIL) form a helical membrane-spanning segment. Residues 268 to 273 (KKKKTK) lie on the Cytoplasmic side of the membrane. Residues 274-294 (YTICISALSASVALINLGDII) traverse the membrane as a helical segment. Residues 295–324 (KIGVGYEKVLCPEPGRFATQVDDPLCGLTA) are Extracellular-facing. A helical membrane pass occupies residues 325 to 345 (ALFHVGICSTVLWTTTMAIYL). Topologically, residues 346–358 (YSAIKNIKLFKFR) are cytoplasmic. Residues 359-379 (YFIIFNTGFSLTSLIIAASAS) traverse the membrane as a helical segment. Over 380–401 (KFEAGTGSIECWIRDRWYSICL) the chain is Extracellular. The helical transmembrane segment at 402–422 (FWLPCGICLLIGTICIASVIV) threads the bilayer. Topologically, residues 423-445 (EIYKVSKNIKLSESETIMRQIKP) are cytoplasmic. The chain crosses the membrane as a helical span at residues 446–466 (IISVILVSGSFTYLFIIFFDI). At 467-502 (ERNFGGYRSAVTDYVLCLLNSTDNGIECHTSGPSYN) the chain is on the extracellular side. The N-linked (GlcNAc...) asparagine glycan is linked to Asn-486. The chain crosses the membrane as a helical span at residues 503–523 (PYFMFYFFMRFFGILFFLIYG). Residues 524–574 (TSKNARDSWYELFIKIKVSLSETSSTISNNSGGGSSQQKQQQQNEIKLEKI) are Cytoplasmic-facing. Low complexity predominate over residues 550–568 (ISNNSGGGSSQQKQQQQNE). Residues 550 to 574 (ISNNSGGGSSQQKQQQQNEIKLEKI) form a disordered region.

Belongs to the G-protein coupled receptor Fz/Smo family.

Its subcellular location is the membrane. This chain is Frizzled and smoothened-like protein G (fslG), found in Dictyostelium discoideum (Social amoeba).